Reading from the N-terminus, the 295-residue chain is Phosphoribosylaminoimidazole-succinocarboxamide synthase (295 aa).

Belongs to the SAICAR synthetase family.

It catalyses the reaction 5-amino-1-(5-phospho-D-ribosyl)imidazole-4-carboxylate + L-aspartate + ATP = (2S)-2-[5-amino-1-(5-phospho-beta-D-ribosyl)imidazole-4-carboxamido]succinate + ADP + phosphate + 2 H(+). It functions in the pathway purine metabolism; IMP biosynthesis via de novo pathway; 5-amino-1-(5-phospho-D-ribosyl)imidazole-4-carboxamide from 5-amino-1-(5-phospho-D-ribosyl)imidazole-4-carboxylate: step 1/2. This is Phosphoribosylaminoimidazole-succinocarboxamide synthase from Corynebacterium ammoniagenes (Brevibacterium ammoniagenes).